A 180-amino-acid polypeptide reads, in one-letter code: Large ribosomal subunit protein uL6 (180 aa).

It belongs to the universal ribosomal protein uL6 family. As to quaternary structure, part of the 50S ribosomal subunit.

Its function is as follows. This protein binds to the 23S rRNA, and is important in its secondary structure. It is located near the subunit interface in the base of the L7/L12 stalk, and near the tRNA binding site of the peptidyltransferase center. This is Large ribosomal subunit protein uL6 from Cutibacterium acnes (strain DSM 16379 / KPA171202) (Propionibacterium acnes).